Reading from the N-terminus, the 418-residue chain is Serine--tRNA ligase (418 aa).

L-serine is bound at residue 231–233 (TAE). 262–264 (RSE) is an ATP binding site. An L-serine-binding site is contributed by E285. 349 to 352 (EISS) is a binding site for ATP. S385 contacts L-serine.

The protein belongs to the class-II aminoacyl-tRNA synthetase family. Type-1 seryl-tRNA synthetase subfamily. As to quaternary structure, homodimer. The tRNA molecule binds across the dimer.

The protein resides in the cytoplasm. It catalyses the reaction tRNA(Ser) + L-serine + ATP = L-seryl-tRNA(Ser) + AMP + diphosphate + H(+). The catalysed reaction is tRNA(Sec) + L-serine + ATP = L-seryl-tRNA(Sec) + AMP + diphosphate + H(+). The protein operates within aminoacyl-tRNA biosynthesis; selenocysteinyl-tRNA(Sec) biosynthesis; L-seryl-tRNA(Sec) from L-serine and tRNA(Sec): step 1/1. Functionally, catalyzes the attachment of serine to tRNA(Ser). Is also able to aminoacylate tRNA(Sec) with serine, to form the misacylated tRNA L-seryl-tRNA(Sec), which will be further converted into selenocysteinyl-tRNA(Sec). The sequence is that of Serine--tRNA ligase from Ureaplasma parvum serovar 3 (strain ATCC 27815 / 27 / NCTC 11736).